The chain runs to 98 residues: UPF0251 protein SO_0727 (98 aa).

It belongs to the UPF0251 family.

This chain is UPF0251 protein SO_0727, found in Shewanella oneidensis (strain ATCC 700550 / JCM 31522 / CIP 106686 / LMG 19005 / NCIMB 14063 / MR-1).